Reading from the N-terminus, the 92-residue chain is Small ribosomal subunit protein uS19 (92 aa).

It belongs to the universal ribosomal protein uS19 family.

In terms of biological role, protein S19 forms a complex with S13 that binds strongly to the 16S ribosomal RNA. The chain is Small ribosomal subunit protein uS19 from Polaromonas sp. (strain JS666 / ATCC BAA-500).